Here is a 482-residue protein sequence, read N- to C-terminus: 7-deoxyloganetic acid glucosyltransferase (482 aa).

The active-site Proton acceptor is His22. Position 22 (His22) interacts with an anthocyanidin. Asp127 (charge relay) is an active-site residue. The UDP-alpha-D-glucose site is built by Thr149, Ala362, Gln364, His379, Trp382, Asn383, Ser384, and Glu387. Position 402 (Ala402) interacts with an anthocyanidin. UDP-alpha-D-glucose-binding residues include Asp403 and Gln404.

This sequence belongs to the UDP-glycosyltransferase family. As to expression, expressed in leaves, roots and stems. Lower levels of expression in flowers. Preferentially expressed in internal phloem parenchyma cells.

It carries out the reaction 7-deoxyloganetate + UDP-alpha-D-glucose = 7-deoxyloganate + UDP + H(+). Functionally, iridoid glucosyltransferase acting exclusively on 7-deoxyloganetic acid. No activity with 7-deoxyloganetin. Catalyzes the fourth to last step in secologanin biosynthesis. This is 7-deoxyloganetic acid glucosyltransferase (UGT709C2) from Catharanthus roseus (Madagascar periwinkle).